A 314-amino-acid chain; its full sequence is Ribose-phosphate pyrophosphokinase (314 aa).

Residues aspartate 37–glutamate 39 and arginine 96–glutamine 97 each bind ATP. Histidine 131 and aspartate 170 together coordinate Mg(2+). Lysine 194 is an active-site residue. D-ribose 5-phosphate contacts are provided by residues arginine 196, aspartate 220, and aspartate 224–threonine 228.

This sequence belongs to the ribose-phosphate pyrophosphokinase family. Class I subfamily. Homohexamer. It depends on Mg(2+) as a cofactor.

It is found in the cytoplasm. It carries out the reaction D-ribose 5-phosphate + ATP = 5-phospho-alpha-D-ribose 1-diphosphate + AMP + H(+). It functions in the pathway metabolic intermediate biosynthesis; 5-phospho-alpha-D-ribose 1-diphosphate biosynthesis; 5-phospho-alpha-D-ribose 1-diphosphate from D-ribose 5-phosphate (route I): step 1/1. Functionally, involved in the biosynthesis of the central metabolite phospho-alpha-D-ribosyl-1-pyrophosphate (PRPP) via the transfer of pyrophosphoryl group from ATP to 1-hydroxyl of ribose-5-phosphate (Rib-5-P). In Vibrio cholerae serotype O1 (strain ATCC 39315 / El Tor Inaba N16961), this protein is Ribose-phosphate pyrophosphokinase.